A 500-amino-acid polypeptide reads, in one-letter code: Metacaspase-5 (500 aa).

The first 18 residues, 1–18, serve as a signal peptide directing secretion; it reads MDAALALLFGQVATAVLP. Positions 19–63 are important for catalytic activity; sequence YVVNSIGRVPRPKRVDVKKAMGEAHQCRPVVPYRAPRPYTEGRVK. Asparagine 70 and asparagine 113 each carry an N-linked (GlcNAc...) asparagine glycan. Histidine 147 is an active-site residue. Aspartate 162, aspartate 178, and aspartate 179 together coordinate Ca(2+). The active site involves cysteine 202. Residue aspartate 209 participates in Ca(2+) binding. Residues asparagine 219, asparagine 235, asparagine 258, asparagine 264, asparagine 283, and asparagine 332 are each glycosylated (N-linked (GlcNAc...) asparagine). Disordered regions lie at residues 358–419 and 444–500; these read EATL…QAYY and QPPQ…PGRK. Residues 379–389 are compositionally biased toward polar residues; the sequence is ASTSNGKSNPG. The span at 444-461 shows a compositional bias: low complexity; the sequence is QPPQQAYYQPPQQAYYQP.

This sequence belongs to the peptidase C14B family.

It is found in the recycling endosome. Functionally, cysteine protease that cleaves specifically after arginine or lysine residues. In Trypanosoma brucei brucei, this protein is Metacaspase-5.